The sequence spans 232 residues: 5'-methylthioadenosine/S-adenosylhomocysteine nucleosidase (232 aa).

E12 serves as the catalytic Proton acceptor. Residues G78, M153, and 174–175 (ME) each bind substrate. D198 functions as the Proton donor in the catalytic mechanism.

The protein belongs to the PNP/UDP phosphorylase family. MtnN subfamily.

The enzyme catalyses S-adenosyl-L-homocysteine + H2O = S-(5-deoxy-D-ribos-5-yl)-L-homocysteine + adenine. The catalysed reaction is S-methyl-5'-thioadenosine + H2O = 5-(methylsulfanyl)-D-ribose + adenine. It catalyses the reaction 5'-deoxyadenosine + H2O = 5-deoxy-D-ribose + adenine. The protein operates within amino-acid biosynthesis; L-methionine biosynthesis via salvage pathway; S-methyl-5-thio-alpha-D-ribose 1-phosphate from S-methyl-5'-thioadenosine (hydrolase route): step 1/2. Its function is as follows. Catalyzes the irreversible cleavage of the glycosidic bond in both 5'-methylthioadenosine (MTA) and S-adenosylhomocysteine (SAH/AdoHcy) to adenine and the corresponding thioribose, 5'-methylthioribose and S-ribosylhomocysteine, respectively. Also cleaves 5'-deoxyadenosine, a toxic by-product of radical S-adenosylmethionine (SAM) enzymes, into 5-deoxyribose and adenine. The polypeptide is 5'-methylthioadenosine/S-adenosylhomocysteine nucleosidase (Anoxybacillus flavithermus (strain DSM 21510 / WK1)).